Consider the following 208-residue polypeptide: Uracil phosphoribosyltransferase (208 aa).

5-phospho-alpha-D-ribose 1-diphosphate-binding positions include Arg-78, Arg-103, and Asp-130–Ser-138. Uracil contacts are provided by residues Ile-193 and Gly-198 to Ala-200. Asp-199 serves as a coordination point for 5-phospho-alpha-D-ribose 1-diphosphate.

This sequence belongs to the UPRTase family. Mg(2+) serves as cofactor.

The enzyme catalyses UMP + diphosphate = 5-phospho-alpha-D-ribose 1-diphosphate + uracil. The protein operates within pyrimidine metabolism; UMP biosynthesis via salvage pathway; UMP from uracil: step 1/1. With respect to regulation, allosterically activated by GTP. Its function is as follows. Catalyzes the conversion of uracil and 5-phospho-alpha-D-ribose 1-diphosphate (PRPP) to UMP and diphosphate. In Histophilus somni (strain 129Pt) (Haemophilus somnus), this protein is Uracil phosphoribosyltransferase.